A 427-amino-acid polypeptide reads, in one-letter code: Transcription termination factor Rho (427 aa).

Residues 51–125 form the Rho RNA-BD domain; it reads LLFMEGVLEI…LHVEAVNGDD (75 aa). ATP-binding positions include 168–173, 180–185, and R211; these read GFGQRG and KAGKTM.

It belongs to the Rho family. As to quaternary structure, homohexamer. The homohexamer assembles into an open ring structure.

Facilitates transcription termination by a mechanism that involves Rho binding to the nascent RNA, activation of Rho's RNA-dependent ATPase activity, and release of the mRNA from the DNA template. The polypeptide is Transcription termination factor Rho (Bacillus subtilis (strain 168)).